Here is a 529-residue protein sequence, read N- to C-terminus: Bifunctional purine biosynthesis protein PurH (529 aa).

The MGS-like domain maps to Pro8 to Thr158.

It belongs to the PurH family.

It catalyses the reaction (6R)-10-formyltetrahydrofolate + 5-amino-1-(5-phospho-beta-D-ribosyl)imidazole-4-carboxamide = 5-formamido-1-(5-phospho-D-ribosyl)imidazole-4-carboxamide + (6S)-5,6,7,8-tetrahydrofolate. It carries out the reaction IMP + H2O = 5-formamido-1-(5-phospho-D-ribosyl)imidazole-4-carboxamide. It participates in purine metabolism; IMP biosynthesis via de novo pathway; 5-formamido-1-(5-phospho-D-ribosyl)imidazole-4-carboxamide from 5-amino-1-(5-phospho-D-ribosyl)imidazole-4-carboxamide (10-formyl THF route): step 1/1. It functions in the pathway purine metabolism; IMP biosynthesis via de novo pathway; IMP from 5-formamido-1-(5-phospho-D-ribosyl)imidazole-4-carboxamide: step 1/1. The sequence is that of Bifunctional purine biosynthesis protein PurH from Caulobacter vibrioides (strain ATCC 19089 / CIP 103742 / CB 15) (Caulobacter crescentus).